Here is a 98-residue protein sequence, read N- to C-terminus: Large ribosomal subunit protein uL23 (98 aa).

This sequence belongs to the universal ribosomal protein uL23 family. As to quaternary structure, part of the 50S ribosomal subunit. Contacts protein L29, and trigger factor when it is bound to the ribosome.

Its function is as follows. One of the early assembly proteins it binds 23S rRNA. One of the proteins that surrounds the polypeptide exit tunnel on the outside of the ribosome. Forms the main docking site for trigger factor binding to the ribosome. The protein is Large ribosomal subunit protein uL23 of Lactobacillus delbrueckii subsp. bulgaricus (strain ATCC 11842 / DSM 20081 / BCRC 10696 / JCM 1002 / NBRC 13953 / NCIMB 11778 / NCTC 12712 / WDCM 00102 / Lb 14).